We begin with the raw amino-acid sequence, 129 residues long: Small ribosomal subunit protein uS11 (129 aa).

The protein belongs to the universal ribosomal protein uS11 family. In terms of assembly, part of the 30S ribosomal subunit. Interacts with proteins S7 and S18. Binds to IF-3.

Located on the platform of the 30S subunit, it bridges several disparate RNA helices of the 16S rRNA. Forms part of the Shine-Dalgarno cleft in the 70S ribosome. In Xanthobacter autotrophicus (strain ATCC BAA-1158 / Py2), this protein is Small ribosomal subunit protein uS11.